We begin with the raw amino-acid sequence, 645 residues long: COP9 signalosome complex subunit 10 (645 aa).

Acidic residues predominate over residues 1–45; the sequence is MSDEDNNYDDFMLSDDEGMESIEMEEETDDEDKQNIEINEDNSQD. The segment at 1–63 is disordered; it reads MSDEDNNYDD…HKQHEQGTFE (63 aa). Over residues 46 to 63 the composition is skewed to basic and acidic residues; it reads DQDRGAARHKQHEQGTFE. A PCI domain is found at 348–543; it reads DLSFALMRYY…DLVYFGDENK (196 aa).

Component of a COP9 signalosome-like (CSN) complex, composed of at least RRI1/CSN5, CSN9, RRI2/CSN10, PCI8/CSN11, CSN12 and CSI1. In the complex, it probably interacts directly with CSN12.

It localises to the cytoplasm. It is found in the nucleus. Functionally, component of the COP9 signalosome (CSN) complex that acts as an regulator of the ubiquitin (Ubl) conjugation pathway by mediating the deneddylation of the cullin subunit of SCF-type E3 ubiquitin-protein ligase complexes. The CSN complex is involved in the regulation of the mating pheromone response. The protein is COP9 signalosome complex subunit 10 (RRI2) of Saccharomyces cerevisiae (strain ATCC 204508 / S288c) (Baker's yeast).